The chain runs to 107 residues: Ornithine carbamoyltransferase, catabolic (107 aa).

Carbamoyl phosphate-binding positions include 57 to 61 and glutamine 84; that span reads STRTR.

This sequence belongs to the aspartate/ornithine carbamoyltransferase superfamily. OTCase family.

It is found in the cytoplasm. It carries out the reaction carbamoyl phosphate + L-ornithine = L-citrulline + phosphate + H(+). It participates in amino-acid degradation; L-arginine degradation via ADI pathway; carbamoyl phosphate from L-arginine: step 2/2. The chain is Ornithine carbamoyltransferase, catabolic (arcB) from Streptococcus pyogenes.